The chain runs to 253 residues: Homeobox protein EMX2 (253 aa).

The segment at residues proline 155–lysine 214 is a DNA-binding region (homeobox). The segment at glutamine 213–aspartate 253 is disordered. Residues lysine 225 to arginine 234 show a composition bias toward basic residues.

Belongs to the EMX homeobox family. Interacts with translation initiation factor EIF4E.

Its subcellular location is the nucleus. The protein resides in the cell projection. The protein localises to the axon. In terms of biological role, transcription factor, which in cooperation with EMX1, acts to generate the boundary between the roof and archipallium in the developing brain. May function in combination with OTX1/2 to specify cell fates in the developing central nervous system. In the inner ear, it controls the distribution of GPR156 at hair cell boundaries, and regulates the organization of stereociliary bundles in opposite orientations across the line of polarity reversal (LPR). The chain is Homeobox protein EMX2 (EMX2) from Bos taurus (Bovine).